The primary structure comprises 221 residues: MEVQKEAQRIMTLSVWKMYHSRMQRGGLRLHRSLQLSLVMRSARELYLSAKVETHQPEFPPSRRALDPRLHPPREPEAAMEAATPDVEQPPEPMDTQEEVLRVQETPALCDPPPARVSRKRRSSSDLSDGSDAGLVPSKKARLEEVEGEATSEVSNRLQLPPAQTEGAFPNLARVLQRRFSSLLNCGPAVPPPTPPTCEAKPACRPADNMLNVLVRTVVAF.

Methionine 1 is subject to N-acetylmethionine. The disordered stretch occupies residues 54-156 (THQPEFPPSR…EGEATSEVSN (103 aa)). A compositionally biased stretch (basic and acidic residues) spans 64–77 (RALDPRLHPPREPE). Positions 125–136 (SDLSDGSDAGLV) are enriched in low complexity.

The protein belongs to the IER family.

Its subcellular location is the cytoplasm. The protein resides in the nucleus. Functionally, DNA-binding protein that seems to act as a transcription factor. Involved in the regulation of neuronal differentiation, acts upon JNK-signaling pathway activation and plays a role in neurite outgrowth in hippocampal cells. May mediate with FIBP FGF-signaling in the establishment of laterality in the embryo. Promotes cell motility, seems to stimulate tumor metastasis. This Rattus norvegicus (Rat) protein is Immediate early response gene 2 protein (Ier2).